Reading from the N-terminus, the 258-residue chain is Transcription cofactor vestigial-like protein 1 (258 aa).

2 stretches are compositionally biased toward polar residues: residues 55–65 and 74–87; these read PQELTPSSQSE and SMSPNQWRYSSPWT. Positions 55–93 are disordered; sequence PQELTPSSQSEGVMLKNDDSMSPNQWRYSSPWTKPQPEV.

Belongs to the vestigial family. Interacts with TEFs.

The protein localises to the nucleus. Its function is as follows. May act as a specific coactivator for the mammalian TEFs. This chain is Transcription cofactor vestigial-like protein 1 (VGLL1), found in Homo sapiens (Human).